Here is a 217-residue protein sequence, read N- to C-terminus: Glutathione S-transferase (217 aa).

One can recognise a GST N-terminal domain in the interval 2–82 (TIKVHGNPRS…YLAYTHDHQN (81 aa)). Glutathione is bound by residues Ser-11, 40-41 (HK), 53-54 (QV), and 66-67 (ES). The region spanning 91 to 217 (EKHEMAAQLV…EKTLALQKQA (127 aa)) is the GST C-terminal domain.

Belongs to the GST superfamily. Phi family.

It is found in the cytoplasm. The enzyme catalyses RX + glutathione = an S-substituted glutathione + a halide anion + H(+). In terms of biological role, conjugation of reduced glutathione to a wide number of exogenous and endogenous hydrophobic electrophiles. The sequence is that of Glutathione S-transferase (GST) from Silene vulgaris (Bladder campion).